The following is a 778-amino-acid chain: Phosphoribosylformylglycinamidine synthase subunit PurL (778 aa).

Residue histidine 44 is part of the active site. ATP-binding residues include tyrosine 47 and lysine 86. Residue glutamate 88 participates in Mg(2+) binding. Substrate is bound by residues 89–92 (SHNH) and arginine 111. The Proton acceptor role is filled by histidine 90. Mg(2+) contacts are provided by aspartate 112 and aspartate 265. A substrate-binding site is contributed by 309–311 (ESQ). The segment at 455-474 (TRQPPGEGLPGRSGQAGPPK) is disordered. ATP is bound by residues asparagine 518 and glycine 555. Asparagine 556 contributes to the Mg(2+) binding site. Position 558 (serine 558) interacts with substrate.

Belongs to the FGAMS family. Monomer. Part of the FGAM synthase complex composed of 1 PurL, 1 PurQ and 2 PurS subunits.

The protein resides in the cytoplasm. The enzyme catalyses N(2)-formyl-N(1)-(5-phospho-beta-D-ribosyl)glycinamide + L-glutamine + ATP + H2O = 2-formamido-N(1)-(5-O-phospho-beta-D-ribosyl)acetamidine + L-glutamate + ADP + phosphate + H(+). Its pathway is purine metabolism; IMP biosynthesis via de novo pathway; 5-amino-1-(5-phospho-D-ribosyl)imidazole from N(2)-formyl-N(1)-(5-phospho-D-ribosyl)glycinamide: step 1/2. Its function is as follows. Part of the phosphoribosylformylglycinamidine synthase complex involved in the purines biosynthetic pathway. Catalyzes the ATP-dependent conversion of formylglycinamide ribonucleotide (FGAR) and glutamine to yield formylglycinamidine ribonucleotide (FGAM) and glutamate. The FGAM synthase complex is composed of three subunits. PurQ produces an ammonia molecule by converting glutamine to glutamate. PurL transfers the ammonia molecule to FGAR to form FGAM in an ATP-dependent manner. PurS interacts with PurQ and PurL and is thought to assist in the transfer of the ammonia molecule from PurQ to PurL. This chain is Phosphoribosylformylglycinamidine synthase subunit PurL, found in Symbiobacterium thermophilum (strain DSM 24528 / JCM 14929 / IAM 14863 / T).